A 970-amino-acid polypeptide reads, in one-letter code: Sodium/calcium exchanger 1 (970 aa).

Residues 1-32 (MLQFSLSPTLSMGFHVIAMVALLFSHVDHISA) form the signal peptide. The Extracellular portion of the chain corresponds to 33 to 71 (ETEMEGEGNETGECTGSYYCKKGVILPIWEPQDPSFGDK). N-linked (GlcNAc...) asparagine glycosylation is present at Asn-41. A helical membrane pass occupies residues 72–92 (IARATVYFVAMVYMFLGVSII). Topologically, residues 93 to 133 (ADRFMSSIEVITSQEKEITIKKPNGETTKTTVRIWNETVSN) are cytoplasmic. Residues 134–154 (LTLMALGSSAPEILLSVIEVC) form a helical membrane-spanning segment. An Alpha-1 repeat occupies 138–178 (ALGSSAPEILLSVIEVCGHNFTAGDLGPSTIVGSAAFNMFI). Residues 155–167 (GHNFTAGDLGPST) are Extracellular-facing. An N-linked (GlcNAc...) asparagine glycan is attached at Asn-157. Residues 168–188 (IVGSAAFNMFIIIALCVYVVP) traverse the membrane as a helical segment. Residues 189–201 (DGETRKIKHLRVF) lie on the Cytoplasmic side of the membrane. A helical transmembrane segment spans residues 202–222 (FVTAAWSIFAYTWLYIILSVS). Over 223–228 (SPGVVE) the chain is Extracellular. Residues 229–249 (VWEGLLTFFFFPICVVFAWVA) form a helical membrane-spanning segment. At 250 to 797 (DRRLLFYKYV…FVPPTEYWNG (548 aa)) the chain is on the cytoplasmic side. Residues 251–270 (RRLLFYKYVYKRYRAGKQRG) are putative calmodulin-binding region. Phosphoserine occurs at positions 282 and 389. 2 Calx-beta domains span residues 393–493 (VNTE…VHLS) and 524–624 (ATVT…LEIG). Glu-417, Asp-453, Asp-478, Asp-479, Ile-481, Glu-483, Glu-486, Asp-530, Asp-531, Asp-532, Glu-548, Asp-584, Asp-610, Glu-611, Glu-612, and Glu-715 together coordinate Ca(2+). A helical transmembrane segment spans residues 798–818 (WACFIVSILMIGLLTAFIGDL). Topologically, residues 819–821 (ASH) are extracellular. A helical membrane pass occupies residues 822 to 842 (FACTIALKDSVTAVVFVALGT). An Alpha-2 repeat occupies 839 to 875 (ALGTSVPDTFASKVAATQDQYADASIGNVTGSNAVNV). At 843–871 (SVPDTFASKVAATQDQYADASIGNVTGSN) the chain is on the cytoplasmic side. A helical transmembrane segment spans residues 872 to 892 (AVNVFLGIGVAWSIAAIYHAA). At 893 to 903 (NGEQFKVSPGT) the chain is on the extracellular side. A helical transmembrane segment spans residues 904–924 (LAFSVTLFTIFAFINVGVLLY). Residues 925–941 (RRRPEIGGELGGPRTAK) are Cytoplasmic-facing. The chain crosses the membrane as a helical span at residues 942-962 (LLTSCLFVLLWLLYIFFSSLE). Topologically, residues 963-970 (AYCHIKGF) are extracellular.

This sequence belongs to the Ca(2+):cation antiporter (CaCA) (TC 2.A.19) family. SLC8 subfamily.

It localises to the cell membrane. It carries out the reaction Ca(2+)(in) + 3 Na(+)(out) = Ca(2+)(out) + 3 Na(+)(in). With respect to regulation, activated by micromolar levels of Ca(2+). Mediates the exchange of one Ca(2+) ion against three to four Na(+) ions across the cell membrane, and thereby contributes to the regulation of cytoplasmic Ca(2+) levels and Ca(2+)-dependent cellular processes. Contributes to Ca(2+) transport during excitation-contraction coupling in muscle. In a first phase, voltage-gated channels mediate the rapid increase of cytoplasmic Ca(2+) levels due to release of Ca(2+) stores from the endoplasmic reticulum. SLC8A1 mediates the export of Ca(2+) from the cell during the next phase, so that cytoplasmic Ca(2+) levels rapidly return to baseline. Required for normal embryonic heart development and the onset of heart contractions. This is Sodium/calcium exchanger 1 (SLC8A1) from Bos taurus (Bovine).